The sequence spans 233 residues: Orotidine 5'-phosphate decarboxylase (233 aa).

Residues aspartate 13, lysine 35, 62–71 (DLKFHDIPNT), threonine 122, arginine 182, glutamine 191, glycine 211, and arginine 212 contribute to the substrate site. The active-site Proton donor is the lysine 64.

Belongs to the OMP decarboxylase family. Type 1 subfamily. Homodimer.

The catalysed reaction is orotidine 5'-phosphate + H(+) = UMP + CO2. Its pathway is pyrimidine metabolism; UMP biosynthesis via de novo pathway; UMP from orotate: step 2/2. Its function is as follows. Catalyzes the decarboxylation of orotidine 5'-monophosphate (OMP) to uridine 5'-monophosphate (UMP). This is Orotidine 5'-phosphate decarboxylase from Pseudomonas putida (strain ATCC 47054 / DSM 6125 / CFBP 8728 / NCIMB 11950 / KT2440).